The primary structure comprises 170 residues: Type II secretion system protein H (170 aa).

The propeptide at methionine 1–glycine 5 is leader sequence. An N-methylphenylalanine modification is found at phenylalanine 6. The chain crosses the membrane as a helical span at residues phenylalanine 6–phenylalanine 29.

This sequence belongs to the GSP H family. In terms of assembly, type II secretion is composed of four main components: the outer membrane complex, the inner membrane complex, the cytoplasmic secretion ATPase and the periplasm-spanning pseudopilus. Interacts with core component PulG. Post-translationally, cleaved by prepilin peptidase. In terms of processing, methylated by prepilin peptidase at the amino group of the N-terminal phenylalanine once the leader sequence is cleaved by prepilin peptidase.

Its subcellular location is the cell inner membrane. In terms of biological role, component of the type II secretion system required for the energy-dependent secretion of extracellular factors such as proteases and toxins from the periplasm. Part of the pseudopilus tip complex that is critical for the recognition and binding of secretion substrates. The polypeptide is Type II secretion system protein H (pulH) (Klebsiella pneumoniae).